We begin with the raw amino-acid sequence, 363 residues long: Galactokinase (363 aa).

16 to 19 (EHTD) contacts substrate. Residues serine 50 and 103–109 (GSGLSSS) contribute to the ATP site. Mg(2+) is bound by residues serine 109 and glutamate 141. Aspartate 153 serves as the catalytic Proton acceptor. Tyrosine 205 serves as a coordination point for substrate.

This sequence belongs to the GHMP kinase family. GalK subfamily.

It is found in the cytoplasm. It carries out the reaction alpha-D-galactose + ATP = alpha-D-galactose 1-phosphate + ADP + H(+). Its pathway is carbohydrate metabolism; galactose metabolism. In terms of biological role, catalyzes the transfer of the gamma-phosphate of ATP to D-galactose to form alpha-D-galactose-1-phosphate (Gal-1-P). This Mycobacterium tuberculosis (strain ATCC 25177 / H37Ra) protein is Galactokinase.